A 483-amino-acid polypeptide reads, in one-letter code: Glutamyl-tRNA(Gln) amidotransferase subunit A (483 aa).

Catalysis depends on charge relay system residues lysine 76 and serine 151. Serine 175 (acyl-ester intermediate) is an active-site residue.

This sequence belongs to the amidase family. GatA subfamily. As to quaternary structure, heterotrimer of A, B and C subunits.

The catalysed reaction is L-glutamyl-tRNA(Gln) + L-glutamine + ATP + H2O = L-glutaminyl-tRNA(Gln) + L-glutamate + ADP + phosphate + H(+). Functionally, allows the formation of correctly charged Gln-tRNA(Gln) through the transamidation of misacylated Glu-tRNA(Gln) in organisms which lack glutaminyl-tRNA synthetase. The reaction takes place in the presence of glutamine and ATP through an activated gamma-phospho-Glu-tRNA(Gln). This chain is Glutamyl-tRNA(Gln) amidotransferase subunit A, found in Nitrosospira multiformis (strain ATCC 25196 / NCIMB 11849 / C 71).